Here is a 206-residue protein sequence, read N- to C-terminus: Large ribosomal subunit protein uL4 (206 aa).

Residues 51–76 (AKTRAEVSGGGIKPWRQKGTGRARQG) form a disordered region.

Belongs to the universal ribosomal protein uL4 family. Part of the 50S ribosomal subunit.

One of the primary rRNA binding proteins, this protein initially binds near the 5'-end of the 23S rRNA. It is important during the early stages of 50S assembly. It makes multiple contacts with different domains of the 23S rRNA in the assembled 50S subunit and ribosome. Functionally, forms part of the polypeptide exit tunnel. This chain is Large ribosomal subunit protein uL4, found in Clostridium kluyveri (strain ATCC 8527 / DSM 555 / NBRC 12016 / NCIMB 10680 / K1).